The following is a 125-amino-acid chain: MPPAVSVCASSGISVLRKRSDFLKAARARRQGAGSMMVQARKRDAGEAEGIRVGFTCSKKVGNAVARNRAKRRLREAARLVLPDMGRPGWDYVLIGRPSDTASRPFDGLLDDLRRALRKLHAPKP.

The protein belongs to the RnpA family. Consists of a catalytic RNA component (M1 or rnpB) and a protein subunit.

It catalyses the reaction Endonucleolytic cleavage of RNA, removing 5'-extranucleotides from tRNA precursor.. In terms of biological role, RNaseP catalyzes the removal of the 5'-leader sequence from pre-tRNA to produce the mature 5'-terminus. It can also cleave other RNA substrates such as 4.5S RNA. The protein component plays an auxiliary but essential role in vivo by binding to the 5'-leader sequence and broadening the substrate specificity of the ribozyme. This is Ribonuclease P protein component from Ruegeria pomeroyi (strain ATCC 700808 / DSM 15171 / DSS-3) (Silicibacter pomeroyi).